Here is an 865-residue protein sequence, read N- to C-terminus: Bifunctional uridylyltransferase/uridylyl-removing enzyme (865 aa).

Residues 1 to 318 (MPHVDLNPLK…FPRPDSDARL (318 aa)) are uridylyltransferase. The uridylyl-removing stretch occupies residues 319–675 (IDDDFRNLRE…VRPTEHGEGL (357 aa)). Residues 437–559 (VDQHTLAVVR…VGDERRLAAL (123 aa)) form the HD domain. ACT domains lie at 676–762 (QVMV…RLPH) and 789–865 (RLSV…QQAA). The tract at residues 747–767 (DPHAARHAHAPRRLPHSHARR) is disordered. Basic residues predominate over residues 751–767 (ARHAHAPRRLPHSHARR).

Belongs to the GlnD family. It depends on Mg(2+) as a cofactor.

It catalyses the reaction [protein-PII]-L-tyrosine + UTP = [protein-PII]-uridylyl-L-tyrosine + diphosphate. It carries out the reaction [protein-PII]-uridylyl-L-tyrosine + H2O = [protein-PII]-L-tyrosine + UMP + H(+). Its activity is regulated as follows. Uridylyltransferase (UTase) activity is inhibited by glutamine, while glutamine activates uridylyl-removing (UR) activity. In terms of biological role, modifies, by uridylylation and deuridylylation, the PII regulatory proteins (GlnB and homologs), in response to the nitrogen status of the cell that GlnD senses through the glutamine level. Under low glutamine levels, catalyzes the conversion of the PII proteins and UTP to PII-UMP and PPi, while under higher glutamine levels, GlnD hydrolyzes PII-UMP to PII and UMP (deuridylylation). Thus, controls uridylylation state and activity of the PII proteins, and plays an important role in the regulation of nitrogen assimilation and metabolism. This chain is Bifunctional uridylyltransferase/uridylyl-removing enzyme, found in Bordetella bronchiseptica (strain ATCC BAA-588 / NCTC 13252 / RB50) (Alcaligenes bronchisepticus).